Reading from the N-terminus, the 947-residue chain is Coiled-coil domain-containing protein 39 (947 aa).

Coiled-coil stretches lie at residues 16–194, 221–402, 471–522, and 582–813; these read AIPV…TLDN, QELI…KELL, KVNT…TEKI, and VLTL…IRSG. 2 stretches are compositionally biased toward low complexity: residues 866–911 and 926–947; these read SLPS…VSSP and SPRGSQPSSAGSSRSSSKCKSP. The disordered stretch occupies residues 866-947; sequence SLPSPSSTPS…SRSSSKCKSP (82 aa).

This sequence belongs to the CCDC39 family.

It localises to the cytoplasm. It is found in the cytoskeleton. Its subcellular location is the cilium axoneme. Required for assembly of dynein regulatory complex (DRC) and inner dynein arm (IDA) complexes, which are responsible for ciliary beat regulation, thereby playing a central role in motility in cilia and flagella. Probably acts together with ccdc40 to form a molecular ruler that determines the 96 nanometer (nm) repeat length and arrangements of components in cilia and flagella. Not required for outer dynein arm complexes assembly. This chain is Coiled-coil domain-containing protein 39 (ccdc39), found in Danio rerio (Zebrafish).